Consider the following 463-residue polypeptide: Xanthine permease XanP (463 aa).

The next 12 helical transmembrane spans lie at 43–63, 71–91, 93–113, 126–146, 156–176, 192–212, 222–242, 260–280, 352–372, 379–399, 409–429, and 439–459; these read LLAM…ALGL, IISM…KAWG, VGSG…PLIM, PTMM…EMVI, IITP…LIQV, TFGA…IILL, VASL…MGML, LYYG…VFMI, GFVV…SGFV, VLGG…VRIV, ILII…PLIL, and LLSS…LIFP.

This sequence belongs to the nucleobase:cation symporter-2 (NCS2) (TC 2.A.40) family.

The protein localises to the cell inner membrane. It catalyses the reaction xanthine(in) + H(+)(in) = xanthine(out) + H(+)(out). Its function is as follows. Specific, proton motive force-dependent high-affinity transporter for xanthine. The protein is Xanthine permease XanP (xanP) of Escherichia coli O6:H1 (strain CFT073 / ATCC 700928 / UPEC).